Consider the following 611-residue polypeptide: MPPYRSRTTTHGRNMAGARGLWRATGMKDEDFGKPIIAVVNSFTQFVPGHVHLKDLGQLVAREIESAGGVAKEFNTIAVDDGIAMGHDGMLYSLPSRELIADSVEYMVNAHCADAMVCISNCDKITPGMLMAALRLNIPVVFVSGGPMEAGKVVWEDSVKKLDLVDAMVAAADDHYTDEQVKAIERSACPTCGSCSGMFTANSMNCLTEALGLSLPGNGSTLATHADRKRLFVEAGHLIVDLARRYYEQDDESVLPRSIATFSAFENAMTLDIAMGGSTNTVLHLLAAAQEAEIDFTMADIDRLSRRVPVLCKVAPAVSSVHMEDVHHAGGIMGILGQLDNAGLLTTSIPTVHSETLAKALDHWDVTRTNSEMVHKFYSAAPGGVPTQVAFSQERRFDKVDTDREKGVIHSKEHAFSQDGGLAVLYGNLAEDGCIVKTAGVDDSILKFSGPARIFESQDSAVLGILNGKIKPGDIVLIRYEGPRGGPGMQEMLYPTSYLKSKGLGKACALITDGRFSGGSSGLSIGHVSPEAAEGGTIGLVREGDIIDIDIPNRKIHLAVDDATLAERRAEQDAAGWKPAEERKRKISTALKAYAAMATSAARGAVRKLPD.

Aspartate 81 is a binding site for Mg(2+). Cysteine 122 is a binding site for [2Fe-2S] cluster. Aspartate 123 and lysine 124 together coordinate Mg(2+). Lysine 124 bears the N6-carboxylysine mark. Cysteine 195 contributes to the [2Fe-2S] cluster binding site. A Mg(2+)-binding site is contributed by glutamate 491. The active-site Proton acceptor is serine 517.

It belongs to the IlvD/Edd family. Homodimer. Requires [2Fe-2S] cluster as cofactor. It depends on Mg(2+) as a cofactor.

The enzyme catalyses (2R)-2,3-dihydroxy-3-methylbutanoate = 3-methyl-2-oxobutanoate + H2O. It carries out the reaction (2R,3R)-2,3-dihydroxy-3-methylpentanoate = (S)-3-methyl-2-oxopentanoate + H2O. The protein operates within amino-acid biosynthesis; L-isoleucine biosynthesis; L-isoleucine from 2-oxobutanoate: step 3/4. It participates in amino-acid biosynthesis; L-valine biosynthesis; L-valine from pyruvate: step 3/4. Functionally, functions in the biosynthesis of branched-chain amino acids. Catalyzes the dehydration of (2R,3R)-2,3-dihydroxy-3-methylpentanoate (2,3-dihydroxy-3-methylvalerate) into 2-oxo-3-methylpentanoate (2-oxo-3-methylvalerate) and of (2R)-2,3-dihydroxy-3-methylbutanoate (2,3-dihydroxyisovalerate) into 2-oxo-3-methylbutanoate (2-oxoisovalerate), the penultimate precursor to L-isoleucine and L-valine, respectively. The sequence is that of Dihydroxy-acid dehydratase from Brucella melitensis biotype 1 (strain ATCC 23456 / CCUG 17765 / NCTC 10094 / 16M).